We begin with the raw amino-acid sequence, 724 residues long: Probable dipeptidyl-peptidase 5 (724 aa).

The first 19 residues, 1 to 19, serve as a signal peptide directing secretion; sequence MGALTWLSVVAAAASTALA. N-linked (GlcNAc...) asparagine glycans are attached at residues asparagine 76, asparagine 97, asparagine 154, asparagine 257, asparagine 383, and asparagine 453. Serine 563 acts as the Charge relay system in catalysis. N-linked (GlcNAc...) asparagine glycosylation is present at asparagine 610. Catalysis depends on charge relay system residues aspartate 646 and histidine 678.

Belongs to the peptidase S9C family.

The protein localises to the secreted. Its function is as follows. Extracellular dipeptidyl-peptidase which removes N-terminal dipeptides sequentially from polypeptides having unsubstituted N-termini. In Aspergillus clavatus (strain ATCC 1007 / CBS 513.65 / DSM 816 / NCTC 3887 / NRRL 1 / QM 1276 / 107), this protein is Probable dipeptidyl-peptidase 5 (dpp5).